A 236-amino-acid polypeptide reads, in one-letter code: Large ribosomal subunit protein uL1 (236 aa).

It belongs to the universal ribosomal protein uL1 family. In terms of assembly, part of the 50S ribosomal subunit.

In terms of biological role, binds directly to 23S rRNA. The L1 stalk is quite mobile in the ribosome, and is involved in E site tRNA release. Its function is as follows. Protein L1 is also a translational repressor protein, it controls the translation of the L11 operon by binding to its mRNA. The chain is Large ribosomal subunit protein uL1 from Corynebacterium efficiens (strain DSM 44549 / YS-314 / AJ 12310 / JCM 11189 / NBRC 100395).